Here is a 255-residue protein sequence, read N- to C-terminus: tRNA pseudouridine synthase B (255 aa).

The Nucleophile role is filled by Asp-52. 3 residues coordinate substrate: Tyr-80, Tyr-183, and Leu-204.

It belongs to the pseudouridine synthase TruB family. Type 1 subfamily.

It carries out the reaction uridine(55) in tRNA = pseudouridine(55) in tRNA. Its function is as follows. Responsible for synthesis of pseudouridine from uracil-55 in the psi GC loop of transfer RNAs. This is tRNA pseudouridine synthase B from Blochmanniella floridana.